Reading from the N-terminus, the 27-residue chain is Pregnancy-associated glycoprotein 59 (27 aa).

It belongs to the peptidase A1 family. Post-translationally, glycosylated. As to expression, placenta.

This is Pregnancy-associated glycoprotein 59 (PAG59) from Capra hircus (Goat).